The sequence spans 522 residues: Berberine bridge enzyme-like Cyn d 4 (522 aa).

An N-terminal signal peptide occupies residues 1 to 25 (MARSRAFAFALLICAVAASCHVALS). The cysteines at positions 41 and 98 are disulfide-linked. In terms of domain architecture, FAD-binding PCMH-type spans 76-252 (KTVKPLYIIT…ASWQVKLLPV (177 aa)). Asparagine 88 carries N-linked (GlcNAc...) asparagine glycosylation. FAD contacts are provided by residues 108–114 (VRSGGHD), serine 119, serine 152, 176–177 (VC), 181–185 (GVGGH), phenylalanine 191, glutamate 237, and valine 242. A cross-link (6-(S-cysteinyl)-8alpha-(pros-histidyl)-FAD (His-Cys)) is located at residues 113–177 (HDYEGLSYRS…PKLGFPAGVC (65 aa)). Residues cysteine 308 and cysteine 329 are joined by a disulfide bond. Residues asparagine 325 and asparagine 354 are each glycosylated (N-linked (GlcNAc...) asparagine). 461 to 465 (YVNYR) lines the FAD pocket. Asparagine 477 carries N-linked (GlcNAc...) asparagine glycosylation.

It belongs to the oxygen-dependent FAD-linked oxidoreductase family. Monomer. It depends on FAD as a cofactor. The FAD cofactor is bound via a bicovalent 6-S-cysteinyl, 8alpha-N1-histidyl FAD linkage. Post-translationally, the N-terminus is blocked. In terms of processing, glycosylated. N-glycosylated. Contains fucose, N-acetylglucosamine, and mannose as main carbohydrates (in a ratio of approximately 3:2:1), and a minute amount of xylose. The two most abundant oligosaccharides are Fuc(1)GlcNAc(2)Man(3) and Fuc(1)GlcNAc(2)Man(2), together comprising about 80% of the total carbohydrate content. They are structurally unusual in having a L-Fuc alpha-(1,3)-linked to Asn-linked GlcNAc without a Xyl beta-(1,2)-linked to the branching Man. The other oligosaccharides make up only 9% of the total carbohydrate content and are characterized by the presence of Xyl beta-(1,2)-linked to the branching Man. Expressed in pollen (at protein level).

The polypeptide is Berberine bridge enzyme-like Cyn d 4 (Cynodon dactylon (Bermuda grass)).